The chain runs to 715 residues: Fatty acid oxidation complex subunit alpha (715 aa).

The tract at residues 1–190 (MTTTSAFMLN…RAGLVDDVVP (190 aa)) is enoyl-CoA hydratase. The segment at 306–715 (GPLNSVGILG…WTNGETDQGN (410 aa)) is 3-hydroxyacyl-CoA dehydrogenase.

This sequence in the N-terminal section; belongs to the enoyl-CoA hydratase/isomerase family. It in the central section; belongs to the 3-hydroxyacyl-CoA dehydrogenase family. In terms of assembly, heterotetramer of two alpha chains (FadJ) and two beta chains (FadI).

The protein resides in the cytoplasm. The catalysed reaction is a (3S)-3-hydroxyacyl-CoA = a (2E)-enoyl-CoA + H2O. The enzyme catalyses a 4-saturated-(3S)-3-hydroxyacyl-CoA = a (3E)-enoyl-CoA + H2O. It catalyses the reaction a (3S)-3-hydroxyacyl-CoA + NAD(+) = a 3-oxoacyl-CoA + NADH + H(+). It carries out the reaction (3S)-3-hydroxybutanoyl-CoA = (3R)-3-hydroxybutanoyl-CoA. Its pathway is lipid metabolism; fatty acid beta-oxidation. Its function is as follows. Catalyzes the formation of a hydroxyacyl-CoA by addition of water on enoyl-CoA. Also exhibits 3-hydroxyacyl-CoA epimerase and 3-hydroxyacyl-CoA dehydrogenase activities. The polypeptide is Fatty acid oxidation complex subunit alpha (Salmonella schwarzengrund (strain CVM19633)).